Consider the following 644-residue polypeptide: uncharacterized protein (644 aa).

Disordered stretches follow at residues Met-1–Ser-35 and Gly-48–Asn-106. Ser-28 is modified (phosphoserine). The segment covering Asn-58 to Ser-70 has biased composition (low complexity). The span at Tyr-83 to Asn-106 shows a compositional bias: polar residues. 12 consecutive transmembrane segments (helical) span residues Ile-131 to Phe-151, Ala-190 to Met-210, Leu-218 to Ser-238, Tyr-245 to Ala-265, Leu-286 to Val-306, Tyr-314 to Leu-334, Val-398 to Leu-418, Leu-435 to Leu-455, Val-522 to Ala-542, Val-546 to Gln-566, Ala-583 to Val-603, and Asn-614 to Met-634.

The protein localises to the membrane. This is an uncharacterized protein from Schizosaccharomyces pombe (strain 972 / ATCC 24843) (Fission yeast).